Here is a 482-residue protein sequence, read N- to C-terminus: Membrane-bound lytic murein transglycosylase F (482 aa).

Residues 1-18 form the signal peptide; the sequence is MKGLFLRIITALALLFWA. The segment at 19-267 is non-LT domain; that stretch reads IDMVFPWQFL…NLKEKYLGHI (249 aa). The tract at residues 268–482 is LT domain; it reads SQFDYVDTRS…NLEEIKENKD (215 aa). The active site involves E312. A compositionally biased stretch (polar residues) spans 457–470; sequence ENQTTNDNANNESA. Residues 457 to 482 form a disordered region; it reads ENQTTNDNANNESAVKNLEEIKENKD. The span at 473-482 shows a compositional bias: basic and acidic residues; it reads NLEEIKENKD.

It in the N-terminal section; belongs to the bacterial solute-binding protein 3 family. In the C-terminal section; belongs to the transglycosylase Slt family.

It is found in the cell outer membrane. The catalysed reaction is Exolytic cleavage of the (1-&gt;4)-beta-glycosidic linkage between N-acetylmuramic acid (MurNAc) and N-acetylglucosamine (GlcNAc) residues in peptidoglycan, from either the reducing or the non-reducing ends of the peptidoglycan chains, with concomitant formation of a 1,6-anhydrobond in the MurNAc residue.. Functionally, murein-degrading enzyme that degrades murein glycan strands and insoluble, high-molecular weight murein sacculi, with the concomitant formation of a 1,6-anhydromuramoyl product. Lytic transglycosylases (LTs) play an integral role in the metabolism of the peptidoglycan (PG) sacculus. Their lytic action creates space within the PG sacculus to allow for its expansion as well as for the insertion of various structures such as secretion systems and flagella. This is Membrane-bound lytic murein transglycosylase F from Haemophilus influenzae (strain 86-028NP).